Reading from the N-terminus, the 315-residue chain is tRNA dimethylallyltransferase (315 aa).

ATP is bound at residue 13–20; sequence GPTAVGKT. 15–20 contacts substrate; it reads TAVGKT. Positions 38 to 41 are interaction with substrate tRNA; the sequence is DSRL.

Belongs to the IPP transferase family. Monomer. Mg(2+) is required as a cofactor.

It catalyses the reaction adenosine(37) in tRNA + dimethylallyl diphosphate = N(6)-dimethylallyladenosine(37) in tRNA + diphosphate. Catalyzes the transfer of a dimethylallyl group onto the adenine at position 37 in tRNAs that read codons beginning with uridine, leading to the formation of N6-(dimethylallyl)adenosine (i(6)A). The sequence is that of tRNA dimethylallyltransferase from Herpetosiphon aurantiacus (strain ATCC 23779 / DSM 785 / 114-95).